Here is a 319-residue protein sequence, read N- to C-terminus: Selection and upkeep of intraepithelial T-cells protein 9 (319 aa).

The signal sequence occupies residues 1–26 (MESSASCLPGFFMSFLLLQNTVLTQA). One can recognise an Ig-like V-type domain in the interval 27–117 (MRSDIKINIQ…TNQEKKRSIV (91 aa)). Over 27-139 (MRSDIKINIQ…LMSNKFSCPS (113 aa)) the chain is Extracellular. C47 and C101 are disulfide-bonded. N-linked (GlcNAc...) asparagine glycosylation is present at N105. The helical transmembrane segment at 140-160 (IYLITIIFLNFLRGILVFCCL) threads the bilayer. The Cytoplasmic portion of the chain corresponds to 161 to 183 (RRKPVCFRNLMSTVMEALYSKMG). The helical transmembrane segment at 184–204 (VCCLLIWECLLLVLYIAFLPI) threads the bilayer. Residues 205–228 (YVSFRSRAFLLDDTYPLYTNWLWN) lie on the Extracellular side of the membrane. Residues 229–249 (ICIILTVIMVLFPGLILCLLW) traverse the membrane as a helical segment. Residues 250–319 (TLNCYGQVSS…DDTASTLFIS (70 aa)) lie on the Cytoplasmic side of the membrane.

It belongs to the SKINT family. Expressed in skin, thymus and testis.

Its subcellular location is the membrane. In terms of biological role, may act by engaging a cell surface molecule on immature T-cells in the embryonic thymus. This is Selection and upkeep of intraepithelial T-cells protein 9 (Skint9) from Mus musculus (Mouse).